A 272-amino-acid chain; its full sequence is Formamidopyrimidine-DNA glycosylase (272 aa).

The active-site Schiff-base intermediate with DNA is the Pro-2. Glu-3 acts as the Proton donor in catalysis. Lys-58 serves as the catalytic Proton donor; for beta-elimination activity. 3 residues coordinate DNA: His-94, Arg-112, and Arg-153. The segment at 238–272 (FVYDRAGEPCRVCGAPIRQIVQGQRSTYFCPNCQR) adopts an FPG-type zinc-finger fold. Arg-262 acts as the Proton donor; for delta-elimination activity in catalysis.

Belongs to the FPG family. Monomer. Requires Zn(2+) as cofactor.

The enzyme catalyses Hydrolysis of DNA containing ring-opened 7-methylguanine residues, releasing 2,6-diamino-4-hydroxy-5-(N-methyl)formamidopyrimidine.. It carries out the reaction 2'-deoxyribonucleotide-(2'-deoxyribose 5'-phosphate)-2'-deoxyribonucleotide-DNA = a 3'-end 2'-deoxyribonucleotide-(2,3-dehydro-2,3-deoxyribose 5'-phosphate)-DNA + a 5'-end 5'-phospho-2'-deoxyribonucleoside-DNA + H(+). Functionally, involved in base excision repair of DNA damaged by oxidation or by mutagenic agents. Acts as a DNA glycosylase that recognizes and removes damaged bases. Has a preference for oxidized purines, such as 7,8-dihydro-8-oxoguanine (8-oxoG). Has AP (apurinic/apyrimidinic) lyase activity and introduces nicks in the DNA strand. Cleaves the DNA backbone by beta-delta elimination to generate a single-strand break at the site of the removed base with both 3'- and 5'-phosphates. In Burkholderia mallei (strain NCTC 10229), this protein is Formamidopyrimidine-DNA glycosylase.